Reading from the N-terminus, the 160-residue chain is Ribosomal RNA large subunit methyltransferase H (160 aa).

S-adenosyl-L-methionine-binding positions include Leu-76, Gly-108, and 127–132 (FGALTW).

It belongs to the RNA methyltransferase RlmH family. In terms of assembly, homodimer.

Its subcellular location is the cytoplasm. It carries out the reaction pseudouridine(1915) in 23S rRNA + S-adenosyl-L-methionine = N(3)-methylpseudouridine(1915) in 23S rRNA + S-adenosyl-L-homocysteine + H(+). Functionally, specifically methylates the pseudouridine at position 1915 (m3Psi1915) in 23S rRNA. This is Ribosomal RNA large subunit methyltransferase H from Mesorhizobium japonicum (strain LMG 29417 / CECT 9101 / MAFF 303099) (Mesorhizobium loti (strain MAFF 303099)).